We begin with the raw amino-acid sequence, 541 residues long: MHTLIKGVLEEILEEEVIIEYPKDREHGHYATPIAFNLAKVFKKSPLVIAEELALKISTHEKTQGLFDSIVACKGYINFTLSLDLLERFTQKALELKEQFGSQIKSERSQKIFLEFVSANPTGPLHIGHARGAVFGDSLAKIARFLGHEVLCEYYVNDMGSQIRLLGLSVWLAYREHVLKENVTYPEVFYKGEYIIEIAKKANNDLEPSLFKENEETIIEVLSGYAKDLMLLEIKDNLDALGIHFDSYASEKEIFKHKDAVFERLEKANALYEKDSKIWLKSSLYQDESDRVLIKEDKSYTYLTGDIVYHDEKFKQDYTKYINIWGADHHGYIARVKASLEFLGYDSNKLEVLLAQMVRLLKDNEPYKMSKRAGNFILIKDVIDDVGKDALRFIFLSKRLDTHLEFDVNTLKKQDSSNPIYYIHYANSRIHTMLEKSPFSKEEVLQTPLKNLNAEEKYLLFSTLSLPKAIESSFEEYGLQKMCEYAKTLASEFHRFYNAGKILDTPKAKELLKICLMVSLSLTNAFKLLGIEIKTKISAKD.

Residues 119-129 (ANPTGPLHIGH) carry the 'HIGH' region motif.

The protein belongs to the class-I aminoacyl-tRNA synthetase family. As to quaternary structure, monomer.

It is found in the cytoplasm. The catalysed reaction is tRNA(Arg) + L-arginine + ATP = L-arginyl-tRNA(Arg) + AMP + diphosphate. The protein is Arginine--tRNA ligase of Helicobacter pylori (strain HPAG1).